Consider the following 184-residue polypeptide: ATP synthase subunit b, chloroplastic (184 aa).

The helical transmembrane segment at 27-49 (LATNPINLSIVIGVLIFFGKGVL) threads the bilayer.

Belongs to the ATPase B chain family. F-type ATPases have 2 components, F(1) - the catalytic core - and F(0) - the membrane proton channel. F(1) has five subunits: alpha(3), beta(3), gamma(1), delta(1), epsilon(1). F(0) has four main subunits: a(1), b(1), b'(1) and c(10-14). The alpha and beta chains form an alternating ring which encloses part of the gamma chain. F(1) is attached to F(0) by a central stalk formed by the gamma and epsilon chains, while a peripheral stalk is formed by the delta, b and b' chains.

The protein localises to the plastid. It is found in the chloroplast thylakoid membrane. Its function is as follows. F(1)F(0) ATP synthase produces ATP from ADP in the presence of a proton or sodium gradient. F-type ATPases consist of two structural domains, F(1) containing the extramembraneous catalytic core and F(0) containing the membrane proton channel, linked together by a central stalk and a peripheral stalk. During catalysis, ATP synthesis in the catalytic domain of F(1) is coupled via a rotary mechanism of the central stalk subunits to proton translocation. In terms of biological role, component of the F(0) channel, it forms part of the peripheral stalk, linking F(1) to F(0). This is ATP synthase subunit b, chloroplastic from Lotus japonicus (Lotus corniculatus var. japonicus).